A 436-amino-acid chain; its full sequence is T-box transcription factor T (436 aa).

Residues 51-219 (LWLRFKELTN…YNPFAKAFLD (169 aa)) constitute a DNA-binding region (T-box).

In terms of assembly, monomer. Binds DNA as a monomer.

It is found in the nucleus. In terms of biological role, involved in the transcriptional regulation of genes required for mesoderm formation and differentiation. Binds to a palindromic T site 5'-TTCACACCTAGGTGTGAA-3' DNA sequence and activates gene transcription when bound to such a site. The polypeptide is T-box transcription factor T (Mus musculus (Mouse)).